A 315-amino-acid chain; its full sequence is Voltage-dependent calcium channel gamma-3 subunit (315 aa).

The next 4 membrane-spanning stretches (helical) occupy residues 8 to 28 (VQMLITTVGAFAAFSLMTIAV), 104 to 124 (SSVFPILSVTLLFFGGLCVAA), 135 to 155 (ILSAGIFFVSAGLSNIIGIIV), and 181 to 201 (FGAFSFIIAEIVGVVAVHIYI). The disordered stretch occupies residues 232–252 (RRRSSSRSTEPRSRDLSPISK). S248 carries the phosphoserine modification.

It belongs to the PMP-22/EMP/MP20 family. CACNG subfamily. The L-type calcium channel is composed of five subunits: alpha-1, alpha-2/delta, beta and gamma. Acts as an auxiliary subunit for AMPA-selective glutamate receptors (AMPARs). Found in a complex with GRIA1, GRIA2, GRIA3, GRIA4, CNIH2, CNIH3, CACNG2, CACNG4, CACNG5, CACNG7 and CACNG8. Interacts with AP4M1 and GRIA1; associates GRIA1 with the adaptor protein complex 4 (AP-4) to target GRIA1 to the somatodendritic compartment of neurons.

The protein resides in the membrane. In terms of biological role, regulates the trafficking and gating properties of AMPA-selective glutamate receptors (AMPARs). Promotes their targeting to the cell membrane and synapses and modulates their gating properties by slowing their rates of activation, deactivation and desensitization. Does not show subunit-specific AMPA receptor regulation and regulates all AMPAR subunits. Thought to stabilize the calcium channel in an inactivated (closed) state. This Bos taurus (Bovine) protein is Voltage-dependent calcium channel gamma-3 subunit (CACNG3).